Here is a 215-residue protein sequence, read N- to C-terminus: N-(5'-phosphoribosyl)anthranilate isomerase (215 aa).

This sequence belongs to the TrpF family.

The enzyme catalyses N-(5-phospho-beta-D-ribosyl)anthranilate = 1-(2-carboxyphenylamino)-1-deoxy-D-ribulose 5-phosphate. Its pathway is amino-acid biosynthesis; L-tryptophan biosynthesis; L-tryptophan from chorismate: step 3/5. The protein is N-(5'-phosphoribosyl)anthranilate isomerase of Pelodictyon phaeoclathratiforme (strain DSM 5477 / BU-1).